Here is a 426-residue protein sequence, read N- to C-terminus: Serine--tRNA ligase (426 aa).

233 to 235 lines the L-serine pocket; the sequence is TAE. Residue 264-266 participates in ATP binding; the sequence is RSE. Glu287 is an L-serine binding site. 351–354 is an ATP binding site; sequence EISS. Ser387 is a binding site for L-serine.

The protein belongs to the class-II aminoacyl-tRNA synthetase family. Type-1 seryl-tRNA synthetase subfamily. As to quaternary structure, homodimer. The tRNA molecule binds across the dimer.

It is found in the cytoplasm. It catalyses the reaction tRNA(Ser) + L-serine + ATP = L-seryl-tRNA(Ser) + AMP + diphosphate + H(+). The enzyme catalyses tRNA(Sec) + L-serine + ATP = L-seryl-tRNA(Sec) + AMP + diphosphate + H(+). It participates in aminoacyl-tRNA biosynthesis; selenocysteinyl-tRNA(Sec) biosynthesis; L-seryl-tRNA(Sec) from L-serine and tRNA(Sec): step 1/1. Catalyzes the attachment of serine to tRNA(Ser). Is also able to aminoacylate tRNA(Sec) with serine, to form the misacylated tRNA L-seryl-tRNA(Sec), which will be further converted into selenocysteinyl-tRNA(Sec). In Azotobacter vinelandii (strain DJ / ATCC BAA-1303), this protein is Serine--tRNA ligase.